The primary structure comprises 305 residues: UDP-3-O-acyl-N-acetylglucosamine deacetylase (305 aa).

3 residues coordinate Zn(2+): H78, H237, and D241. Catalysis depends on H264, which acts as the Proton donor.

The protein belongs to the LpxC family. The cofactor is Zn(2+).

It carries out the reaction a UDP-3-O-[(3R)-3-hydroxyacyl]-N-acetyl-alpha-D-glucosamine + H2O = a UDP-3-O-[(3R)-3-hydroxyacyl]-alpha-D-glucosamine + acetate. The protein operates within glycolipid biosynthesis; lipid IV(A) biosynthesis; lipid IV(A) from (3R)-3-hydroxytetradecanoyl-[acyl-carrier-protein] and UDP-N-acetyl-alpha-D-glucosamine: step 2/6. In terms of biological role, catalyzes the hydrolysis of UDP-3-O-myristoyl-N-acetylglucosamine to form UDP-3-O-myristoylglucosamine and acetate, the committed step in lipid A biosynthesis. The chain is UDP-3-O-acyl-N-acetylglucosamine deacetylase from Paraburkholderia phytofirmans (strain DSM 17436 / LMG 22146 / PsJN) (Burkholderia phytofirmans).